The sequence spans 63 residues: Overexpressed in colon carcinoma 1 protein homolog (63 aa).

Residues 1 to 10 show a composition bias toward polar residues; that stretch reads MGCGNSTATS. The tract at residues 1–37 is disordered; it reads MGCGNSTATSAAAGRGKPGAVKDATEDSITEDDKRRN.

The protein belongs to the OCC1 family.

The protein is Overexpressed in colon carcinoma 1 protein homolog of Rattus norvegicus (Rat).